The chain runs to 270 residues: Cyclase-like protein 3 (270 aa).

The N-terminal stretch at 1–23 (MMAHLAPLFLLLLLLLLPLHAAA) is a signal peptide.

It belongs to the Cyclase 1 superfamily. Highly expressed in leaf sheaths. leaf collars and flag leaves. Expressed in roots, stems, glumes, young panicles and pistils.

The protein resides in the secreted. The protein localises to the extracellular space. Its subcellular location is the extracellular matrix. Its function is as follows. May be involved in response to stresses. This chain is Cyclase-like protein 3, found in Oryza sativa subsp. japonica (Rice).